A 704-amino-acid chain; its full sequence is Low calcium response locus protein D (704 aa).

Transmembrane regions (helical) follow at residues 18-35, 42-61, 108-132, 200-220, 235-259, 278-297, and 304-320; these read IMLAVLLLAVVFMMVLPL, ILIAVNMTISVVLLMIAIYI, FVVGGNLIVGIVIFLIITIVQFLVI, AIAGLIIIFVNILGGVTIGVT, ILTVGDGMVSQVPALLIAITAGIIV, VVAQPKAMLIGGVLLLLFGL, and VTFLILALLVGCGGYML.

This sequence belongs to the FHIPEP (flagella/HR/invasion proteins export pore) family.

The protein localises to the cell inner membrane. Functionally, could be involved in the secretion of the yop virulence proteins. The sequence is that of Low calcium response locus protein D (lcrD) from Yersinia pestis.